We begin with the raw amino-acid sequence, 250 residues long: Eukaryotic translation initiation factor 3 subunit K (250 aa).

Positions 46–229 constitute a PCI domain; that stretch reads FDCYANLALL…KENEARSEVK (184 aa).

It belongs to the eIF-3 subunit K family. Component of the eukaryotic translation initiation factor 3 (eIF-3) complex.

Its subcellular location is the cytoplasm. In terms of biological role, component of the eukaryotic translation initiation factor 3 (eIF-3) complex, which is involved in protein synthesis of a specialized repertoire of mRNAs and, together with other initiation factors, stimulates binding of mRNA and methionyl-tRNAi to the 40S ribosome. The eIF-3 complex specifically targets and initiates translation of a subset of mRNAs involved in cell proliferation. The protein is Eukaryotic translation initiation factor 3 subunit K of Emericella nidulans (strain FGSC A4 / ATCC 38163 / CBS 112.46 / NRRL 194 / M139) (Aspergillus nidulans).